The primary structure comprises 356 residues: UDP-N-acetylglucosamine--N-acetylmuramyl-(pentapeptide) pyrophosphoryl-undecaprenol N-acetylglucosamine transferase (356 aa).

Positions 166, 196, and 290 each coordinate UDP-N-acetyl-alpha-D-glucosamine.

The protein belongs to the glycosyltransferase 28 family. MurG subfamily.

It is found in the cell membrane. It catalyses the reaction Mur2Ac(oyl-L-Ala-gamma-D-Glu-L-Lys-D-Ala-D-Ala)-di-trans,octa-cis-undecaprenyl diphosphate + UDP-N-acetyl-alpha-D-glucosamine = beta-D-GlcNAc-(1-&gt;4)-Mur2Ac(oyl-L-Ala-gamma-D-Glu-L-Lys-D-Ala-D-Ala)-di-trans,octa-cis-undecaprenyl diphosphate + UDP + H(+). It participates in cell wall biogenesis; peptidoglycan biosynthesis. Cell wall formation. Catalyzes the transfer of a GlcNAc subunit on undecaprenyl-pyrophosphoryl-MurNAc-pentapeptide (lipid intermediate I) to form undecaprenyl-pyrophosphoryl-MurNAc-(pentapeptide)GlcNAc (lipid intermediate II). The sequence is that of UDP-N-acetylglucosamine--N-acetylmuramyl-(pentapeptide) pyrophosphoryl-undecaprenol N-acetylglucosamine transferase from Staphylococcus aureus (strain USA300).